A 495-amino-acid chain; its full sequence is Glutamyl-tRNA(Gln) amidotransferase subunit A (495 aa).

Active-site charge relay system residues include lysine 78 and serine 158. Serine 182 (acyl-ester intermediate) is an active-site residue.

It belongs to the amidase family. GatA subfamily. In terms of assembly, heterotrimer of A, B and C subunits.

It catalyses the reaction L-glutamyl-tRNA(Gln) + L-glutamine + ATP + H2O = L-glutaminyl-tRNA(Gln) + L-glutamate + ADP + phosphate + H(+). Functionally, allows the formation of correctly charged Gln-tRNA(Gln) through the transamidation of misacylated Glu-tRNA(Gln) in organisms which lack glutaminyl-tRNA synthetase. The reaction takes place in the presence of glutamine and ATP through an activated gamma-phospho-Glu-tRNA(Gln). In Ruegeria sp. (strain TM1040) (Silicibacter sp.), this protein is Glutamyl-tRNA(Gln) amidotransferase subunit A.